Here is a 599-residue protein sequence, read N- to C-terminus: MCEQLARLHGCNILIIGDNDCLVNKYGHSVTIACGYDPQGMSVRILKEGGGGGGGGGGGQQLEEYPVNAKTTHLNHGHTSHVVVAGGEMLYLKFASKADCQLFRSLLQKMSGKVNSVFNLRTEDSSASQYFQFYGYLSQQQNMMQDFVRTSTYQRAIYSNSQDFHNKIVLDVGAGSGILSFFAVQAGAAKVYAVEASNMAQYAQQLVHSNNLNGKITVIAGKIEEIELPEMVDVIISEPMGYMLYNERMLETYLHGKKWLKPEGKMFPSRGDLHVAPFTDEALYMEQYNKANFWMQSEFHGVNLVSLRDAAMKEYFRQPIVDTFDIRICMAKSIRHTTNFLTADEKDLHRIQIDVEFHILETGTCHGLAFWFDVEFAGSCSQIWLSTAPTESLTHWYQVRCLLQTPIFVKQGQVLSGKVVLAANQRQSYDVEIDLKLEGTMITSCNTLDLKNPYFRYTGAPVPAPPGSNTTSPSEAYWGQLDAQGARNAVNLVNGITVNGLGEVDMSIINSNMMPMGNQPNIHPGLISSTGRQQSAQQQVTPSQQLTMNPTIACAATSTQNVAQQQLIGGAISPSLFTTPTQQIINSHHAQPIHGGQFY.

In terms of domain architecture, SAM-dependent MTase PRMT-type spans 127–434 (ASQYFQFYGY…QRQSYDVEID (308 aa)). 6 residues coordinate S-adenosyl-L-methionine: Gln140, Arg149, Gly173, Glu195, Glu224, and Thr252. At Arg487 the chain carries Asymmetric dimethylarginine; by autocatalysis.

The protein belongs to the class I-like SAM-binding methyltransferase superfamily. Protein arginine N-methyltransferase family. As to quaternary structure, homodimer. In terms of processing, the dimethylated protein is the major form.

It is found in the cytoplasm. It localises to the nucleus. It carries out the reaction L-arginyl-[protein] + 2 S-adenosyl-L-methionine = N(omega),N(omega)-dimethyl-L-arginyl-[protein] + 2 S-adenosyl-L-homocysteine + 2 H(+). Its function is as follows. Methylates (mono- and asymmetric dimethylation) the guanidino nitrogens of arginyl residues in proteins. May methylate histone H3 at 'Arg-17' and activate transcription via chromatin remodeling. The protein is Histone-arginine methyltransferase CARMER (Art4) of Culex quinquefasciatus (Southern house mosquito).